The following is a 350-amino-acid chain: Flap endonuclease 1 (350 aa).

The interval 1 to 102 is N-domain; the sequence is MGVNLKDLIP…KEIEKRRKIR (102 aa). Mg(2+) is bound by residues aspartate 31, aspartate 84, glutamate 156, glutamate 158, aspartate 177, aspartate 179, and aspartate 240. Residues 120–262 form an I-domain region; the sequence is AARRYAMMSA…KALQLVKAYK (143 aa). The interaction with PCNA stretch occupies residues 341–349; the sequence is KQLGLEAWF.

This sequence belongs to the XPG/RAD2 endonuclease family. FEN1 subfamily. In terms of assembly, interacts with PCNA. PCNA stimulates the nuclease activity without altering cleavage specificity. The cofactor is Mg(2+).

Its function is as follows. Structure-specific nuclease with 5'-flap endonuclease and 5'-3' exonuclease activities involved in DNA replication and repair. During DNA replication, cleaves the 5'-overhanging flap structure that is generated by displacement synthesis when DNA polymerase encounters the 5'-end of a downstream Okazaki fragment. Binds the unpaired 3'-DNA end and kinks the DNA to facilitate 5' cleavage specificity. Cleaves one nucleotide into the double-stranded DNA from the junction in flap DNA, leaving a nick for ligation. Also involved in the base excision repair (BER) pathway. Acts as a genome stabilization factor that prevents flaps from equilibrating into structures that lead to duplications and deletions. Also possesses 5'-3' exonuclease activity on nicked or gapped double-stranded DNA. This chain is Flap endonuclease 1, found in Staphylothermus marinus (strain ATCC 43588 / DSM 3639 / JCM 9404 / F1).